The sequence spans 1481 residues: Cystic fibrosis transmembrane conductance regulator (1481 aa).

At 1 to 77 the chain is on the cytoplasmic side; it reads MQRSPLEKAS…KLINALRRCF (77 aa). The chain crosses the membrane as a helical span at residues 78-98; it reads FWRFTFYGILLYLGEVTKAVQ. The 285-residue stretch at 81–365 folds into the ABC transmembrane type-1 1 domain; the sequence is FTFYGILLYL…WAVQTWYDSL (285 aa). Residues 99-122 are Extracellular-facing; it reads PLLLGRIIASYDPDNKTERSIAIY. A helical transmembrane segment spans residues 123 to 146; sequence LGIGLCLLFIVRTLLLHPAIFGLH. At 147–195 the chain is on the cytoplasmic side; the sequence is HIGMQMRIAMFSLIYKKTLKLSSRVLDKISIGQLVSLLSNNLNKFDEGL. Residues 196 to 216 traverse the membrane as a helical segment; the sequence is ALAHFVWIAPLQVALLMGLIW. At 217-222 the chain is on the extracellular side; sequence ELLQAS. Residues 223–243 traverse the membrane as a helical segment; that stretch reads AFCGLGFLIVLALFQAGLGRM. The Cytoplasmic portion of the chain corresponds to 244–298; that stretch reads MMKYRDQRAGKINERLVITSEMIENIQSVKAYCWEEAMEKIIENLRQTELKLTRK. A helical transmembrane segment spans residues 299–319; sequence AAYVRYFNSSAFFFSGFFVVF. The Extracellular segment spans residues 320-339; sequence LSVLPYALIKGIVLRKIFTT. The chain crosses the membrane as a helical span at residues 340 to 358; that stretch reads ISFCIVLRMAVTRQFPWAV. The Cytoplasmic portion of the chain corresponds to 359–858; the sequence is QTWYDSLGAI…YLRYITLHKS (500 aa). ATP is bound by residues W401, S434, 458-465, and Q493; that span reads GSTGAGKT. The ABC transporter 1 domain maps to 423–646; that stretch reads NGDDNLFFSN…RPDFSSKLMG (224 aa). The S-palmitoyl cysteine moiety is linked to residue C524. Residues S549 and S660 each carry the phosphoserine modification. The disordered R region stretch occupies residues 654–831; the sequence is SSERRNSILT…EEINEEDLKE (178 aa). The residue at position 670 (S670) is a Phosphoserine; by PKA. A Phosphoserine modification is found at S686. K688 participates in a covalent cross-link: Glycyl lysine isopeptide (Lys-Gly) (interchain with G-Cter in ubiquitin). Residues S700 and S712 each carry the phosphoserine modification. T717 carries the phosphothreonine modification. A phosphoserine mark is found at S737, S753, S768, S790, S795, and S813. A helical transmembrane segment spans residues 859–879; the sequence is LIFVLIWCLVIFLAEVAASLV. Positions 859 to 1155 constitute an ABC transmembrane type-1 2 domain; that stretch reads LIFVLIWCLV…AVNSSIDVDS (297 aa). Residues 880–918 lie on the Extracellular side of the membrane; the sequence is VLWLLGNTPFQDKGNSTYSRNNSYAVIITNTSSYYVFYI. N894, N900, and N909 each carry an N-linked (GlcNAc...) asparagine glycan. The discontinuously helical transmembrane segment at 919 to 939 threads the bilayer; it reads YVGVADTLLALGFFRGLPLVH. The Cytoplasmic segment spans residues 940 to 990; the sequence is TLITVSKMLHHKMLHSVLQAPMSTLNTLKAGGILNRFSKDIAILDDLLPLT. The helical transmembrane segment at 991-1011 threads the bilayer; that stretch reads IFDFIQLLLIVIGAIAVVSVL. The Extracellular portion of the chain corresponds to 1012–1013; sequence QP. A helical transmembrane segment spans residues 1014–1034; that stretch reads YIFLATVPVIAAFILLRAYFL. Over 1035 to 1095 the chain is Cytoplasmic; sequence QTSQQLKQLE…TANWFLYLST (61 aa). Residues 1096–1116 form a helical membrane-spanning segment; sequence LRWFQMRIEMIFVIFFIAVTF. Topologically, residues 1117–1130 are extracellular; sequence ISILTTGEGEGTVG. A helical membrane pass occupies residues 1131 to 1151; the sequence is IILTLAMNIMSTLQWAVNSSI. The Cytoplasmic portion of the chain corresponds to 1152 to 1481; that stretch reads DVDSLMRSVS…TEEEVQETRL (330 aa). The ABC transporter 2 domain maps to 1211–1444; the sequence is MTIKDLTAKY…KSLFRQAISH (234 aa). Residues Y1220 and 1245–1252 contribute to the ATP site; that span reads GRTGSGKS. The tract at residues 1387–1481 is interaction with GORASP2; the sequence is RALKQAFADC…TEEEVQETRL (95 aa). The S-palmitoyl cysteine moiety is linked to residue C1396. 2 positions are modified to phosphoserine: S1445 and S1457. The tract at residues 1453–1481 is disordered; that stretch reads HRNSSKYKSQPQIASLKEETEEEVQETRL. A compositionally biased stretch (acidic residues) spans 1471–1481; it reads ETEEEVQETRL. The PDZ-binding motif lies at 1479 to 1481; the sequence is TRL.

It belongs to the ABC transporter superfamily. ABCC family. CFTR transporter (TC 3.A.1.202) subfamily. In terms of assembly, monomer; does not require oligomerization for channel activity. May form oligomers in the membrane. Interacts with SLC26A3, SLC26A6 and NHERF1. Interacts with SHANK2. Interacts with MYO6. Interacts (via C-terminus) with GOPC (via PDZ domain); this promotes CFTR internalization and thereby decreases channel activity. Interacts with SLC4A7 through NHERF1. Found in a complex with MYO5B and RAB11A. Interacts with ANO1. Interacts with SLC26A8. Interacts with AHCYL1; the interaction increases CFTR activity. Interacts with CSE1L. The core-glycosylated form interacts with GORASP2 (via PDZ GRASP-type 1 domain) in respone to ER stress. Interacts with MARCHF2; the interaction leads to CFTR ubiqtuitination and degradation. Interacts with ADGRG2. In terms of processing, N-glycosylated. Post-translationally, phosphorylated; cAMP treatment promotes phosphorylation and activates the channel. Dephosphorylation decreases the ATPase activity (in vitro). Phosphorylation at PKA sites activates the channel. Phosphorylation at PKC sites enhances the response to phosphorylation by PKA. Phosphorylated by AMPK; this inhibits channel activity. Ubiquitinated, leading to its degradation in the lysosome. Deubiquitination by USP10 in early endosomes enhances its endocytic recycling to the cell membrane. Ubiquitinated by RNF185 during ER stress. Ubiquitinated by MARCHF2.

It localises to the apical cell membrane. The protein localises to the early endosome membrane. It is found in the cell membrane. Its subcellular location is the recycling endosome membrane. The protein resides in the endoplasmic reticulum membrane. It localises to the nucleus. The enzyme catalyses ATP + H2O + closed Cl(-) channel = ADP + phosphate + open Cl(-) channel.. The catalysed reaction is chloride(in) = chloride(out). It catalyses the reaction hydrogencarbonate(in) = hydrogencarbonate(out). It carries out the reaction ATP + H2O = ADP + phosphate + H(+). Functionally, epithelial ion channel that plays an important role in the regulation of epithelial ion and water transport and fluid homeostasis. Mediates the transport of chloride ions across the cell membrane. Possesses an intrinsic ATPase activity and utilizes ATP to gate its channel; the passive flow of anions through the channel is gated by cycles of ATP binding and hydrolysis by the ATP-binding domains. The ion channel is also permeable to HCO(3)(-); selectivity depends on the extracellular chloride concentration. Exerts its function also by modulating the activity of other ion channels and transporters. Contributes to the regulation of the pH and the ion content of the epithelial fluid layer. Modulates the activity of the epithelial sodium channel (ENaC) complex, in part by regulating the cell surface expression of the ENaC complex. May regulate bicarbonate secretion and salvage in epithelial cells by regulating the transporter SLC4A7. Can inhibit the chloride channel activity of ANO1. Plays a role in the chloride and bicarbonate homeostasis during sperm epididymal maturation and capacitation. This chain is Cystic fibrosis transmembrane conductance regulator, found in Aotus nancymaae (Ma's night monkey).